A 425-amino-acid polypeptide reads, in one-letter code: Serine--tRNA ligase (425 aa).

226–228 (TSE) lines the L-serine pocket. ATP contacts are provided by residues 257-259 (RRE) and Val273. Glu280 is a binding site for L-serine. Residue 344–347 (ELTS) participates in ATP binding. Thr382 lines the L-serine pocket.

The protein belongs to the class-II aminoacyl-tRNA synthetase family. Type-1 seryl-tRNA synthetase subfamily. Homodimer. The tRNA molecule binds across the dimer.

It is found in the cytoplasm. The catalysed reaction is tRNA(Ser) + L-serine + ATP = L-seryl-tRNA(Ser) + AMP + diphosphate + H(+). It carries out the reaction tRNA(Sec) + L-serine + ATP = L-seryl-tRNA(Sec) + AMP + diphosphate + H(+). Its pathway is aminoacyl-tRNA biosynthesis; selenocysteinyl-tRNA(Sec) biosynthesis; L-seryl-tRNA(Sec) from L-serine and tRNA(Sec): step 1/1. Catalyzes the attachment of serine to tRNA(Ser). Is also able to aminoacylate tRNA(Sec) with serine, to form the misacylated tRNA L-seryl-tRNA(Sec), which will be further converted into selenocysteinyl-tRNA(Sec). The sequence is that of Serine--tRNA ligase from Mycobacterium avium (strain 104).